The following is a 241-amino-acid chain: Leucyl/phenylalanyl-tRNA--protein transferase (241 aa).

The protein belongs to the L/F-transferase family.

The protein localises to the cytoplasm. The catalysed reaction is N-terminal L-lysyl-[protein] + L-leucyl-tRNA(Leu) = N-terminal L-leucyl-L-lysyl-[protein] + tRNA(Leu) + H(+). It carries out the reaction N-terminal L-arginyl-[protein] + L-leucyl-tRNA(Leu) = N-terminal L-leucyl-L-arginyl-[protein] + tRNA(Leu) + H(+). The enzyme catalyses L-phenylalanyl-tRNA(Phe) + an N-terminal L-alpha-aminoacyl-[protein] = an N-terminal L-phenylalanyl-L-alpha-aminoacyl-[protein] + tRNA(Phe). Its function is as follows. Functions in the N-end rule pathway of protein degradation where it conjugates Leu, Phe and, less efficiently, Met from aminoacyl-tRNAs to the N-termini of proteins containing an N-terminal arginine or lysine. This chain is Leucyl/phenylalanyl-tRNA--protein transferase, found in Neisseria meningitidis serogroup A / serotype 4A (strain DSM 15465 / Z2491).